The following is a 298-amino-acid chain: Putative F-box and FNIP repeat-containing protein R286 (298 aa).

The F-box domain maps to 4–48; the sequence is LNVLESHVILHIIEFLPDHEKIKFMSTCKSLYEFRCHVTYNNFYV. 2 FNIP repeats span residues 124-165 and 255-297; these read FNKP…LGHN and WNFD…FISR.

This is Putative F-box and FNIP repeat-containing protein R286 from Acanthamoeba polyphaga (Amoeba).